The primary structure comprises 843 residues: Protein P (843 aa).

The tract at residues 1–177 (MPLSYQHFRK…FCGSPYSWEQ (177 aa)) is terminal protein domain (TP). Residues 178–346 (ELQHGRLVLQ…HCLFHIVNLI (169 aa)) are spacer. Disordered stretches follow at residues 221 to 240 (SRLGPQPTQGQLAGLQQGGS) and 289 to 315 (VSTSKRHSSSGNAVELHHVPPNSSRSQ). The segment covering 223 to 235 (LGPQPTQGQLAGL) has biased composition (low complexity). The tract at residues 347 to 690 (DDWGPCAEHG…YLNLYPVARQ (344 aa)) is polymerase/reverse transcriptase domain (RT). One can recognise a Reverse transcriptase domain in the interval 357 to 600 (EHRIRTPRTP…YSLNFMGYVI (244 aa)). The Mg(2+) site is built by aspartate 429, aspartate 551, and aspartate 552.

Belongs to the hepadnaviridae P protein family.

It catalyses the reaction DNA(n) + a 2'-deoxyribonucleoside 5'-triphosphate = DNA(n+1) + diphosphate. The catalysed reaction is Endonucleolytic cleavage to 5'-phosphomonoester.. With respect to regulation, activated by host HSP70 and HSP40 in vitro to be able to bind the epsilon loop of the pgRNA. Because deletion of the RNase H region renders the protein partly chaperone-independent, the chaperones may be needed indirectly to relieve occlusion of the RNA-binding site by this domain. Inhibited by several reverse-transcriptase inhibitors: Lamivudine, Adefovir and Entecavir. Functionally, multifunctional enzyme that converts the viral RNA genome into dsDNA in viral cytoplasmic capsids. This enzyme displays a DNA polymerase activity that can copy either DNA or RNA templates, and a ribonuclease H (RNase H) activity that cleaves the RNA strand of RNA-DNA heteroduplexes in a partially processive 3'- to 5'-endonucleasic mode. Neo-synthesized pregenomic RNA (pgRNA) are encapsidated together with the P protein, and reverse-transcribed inside the nucleocapsid. Initiation of reverse-transcription occurs first by binding the epsilon loop on the pgRNA genome, and is initiated by protein priming, thereby the 5'-end of (-)DNA is covalently linked to P protein. Partial (+)DNA is synthesized from the (-)DNA template and generates the relaxed circular DNA (RC-DNA) genome. After budding and infection, the RC-DNA migrates in the nucleus, and is converted into a plasmid-like covalently closed circular DNA (cccDNA). The activity of P protein does not seem to be necessary for cccDNA generation, and is presumably released from (+)DNA by host nuclear DNA repair machinery. In Homo sapiens (Human), this protein is Protein P.